The primary structure comprises 851 residues: DNA mismatch repair protein MutS (851 aa).

Position 602–609 (602–609 (GPNMSGKS)) interacts with ATP.

Belongs to the DNA mismatch repair MutS family.

In terms of biological role, this protein is involved in the repair of mismatches in DNA. It is possible that it carries out the mismatch recognition step. This protein has a weak ATPase activity. The chain is DNA mismatch repair protein MutS from Streptococcus pyogenes serotype M18 (strain MGAS8232).